The primary structure comprises 256 residues: MEVIPAIDLLGGQCVRLYQGDYQQAQVFNNDPVQVARTWAEQGATRLHVVDLDGAKQGESVNLGAIAKIAAAIDIPVQVGGGLRTVESVAQLFDVGVERAILGTAAVDNPDLVTELCAKYPGRIAVGIDARDGKVATKGWLETSAVLATDLAKQMATQGVAAIIYTDIHRDGTMAGPNLEALRELAATIEIPVIASGGVSSLADLVNLVALEGIGVTGAIVGRAIYTGDINLAEAVKAVGPQRLQDVFPDDGTAIA.

D8 acts as the Proton acceptor in catalysis. Residue D129 is the Proton donor of the active site.

This sequence belongs to the HisA/HisF family.

The protein localises to the cytoplasm. The enzyme catalyses 1-(5-phospho-beta-D-ribosyl)-5-[(5-phospho-beta-D-ribosylamino)methylideneamino]imidazole-4-carboxamide = 5-[(5-phospho-1-deoxy-D-ribulos-1-ylimino)methylamino]-1-(5-phospho-beta-D-ribosyl)imidazole-4-carboxamide. The protein operates within amino-acid biosynthesis; L-histidine biosynthesis; L-histidine from 5-phospho-alpha-D-ribose 1-diphosphate: step 4/9. The sequence is that of 1-(5-phosphoribosyl)-5-[(5-phosphoribosylamino)methylideneamino] imidazole-4-carboxamide isomerase from Picosynechococcus sp. (strain ATCC 27264 / PCC 7002 / PR-6) (Agmenellum quadruplicatum).